We begin with the raw amino-acid sequence, 168 residues long: Zinc finger A20 and AN1 domain-containing stress-associated protein 1 (168 aa).

Residues proline 13–glutamate 47 form an A20-type zinc finger. Zn(2+) contacts are provided by cysteine 19, cysteine 23, cysteine 35, and cysteine 38. Positions threonine 49–threonine 105 are disordered. Positions leucine 60–threonine 76 are enriched in polar residues. The span at serine 82 to serine 94 shows a compositional bias: low complexity. An AN1-type zinc finger spans residues lysine 103 to alanine 149. The Zn(2+) site is built by cysteine 109, cysteine 112, cysteine 123, cysteine 125, cysteine 130, histidine 133, histidine 139, and cysteine 141.

Functionally, may be involved in environmental stress response. This chain is Zinc finger A20 and AN1 domain-containing stress-associated protein 1 (SAP1), found in Arabidopsis thaliana (Mouse-ear cress).